The primary structure comprises 346 residues: Small ribosomal subunit biogenesis GTPase RsgA 2 (346 aa).

The 156-residue stretch at 93–248 (EEQLIAANFD…VIDTPGMREF (156 aa)) folds into the CP-type G domain. Residues 138 to 141 (TKAD) and 190 to 198 (GSSGVGKSS) each bind GTP. Positions 271, 276, 278, and 284 each coordinate Zn(2+).

It belongs to the TRAFAC class YlqF/YawG GTPase family. RsgA subfamily. As to quaternary structure, monomer. Associates with 30S ribosomal subunit, binds 16S rRNA. Zn(2+) is required as a cofactor.

The protein resides in the cytoplasm. In terms of biological role, one of several proteins that assist in the late maturation steps of the functional core of the 30S ribosomal subunit. Helps release RbfA from mature subunits. May play a role in the assembly of ribosomal proteins into the subunit. Circularly permuted GTPase that catalyzes slow GTP hydrolysis, GTPase activity is stimulated by the 30S ribosomal subunit. The polypeptide is Small ribosomal subunit biogenesis GTPase RsgA 2 (Listeria monocytogenes serotype 4b (strain F2365)).